Here is a 124-residue protein sequence, read N- to C-terminus: UPF0738 protein ABC2521 (124 aa).

Belongs to the UPF0738 family.

In Shouchella clausii (strain KSM-K16) (Alkalihalobacillus clausii), this protein is UPF0738 protein ABC2521.